Consider the following 298-residue polypeptide: Acetylglutamate kinase (298 aa).

Substrate is bound by residues 69-70, arginine 91, and asparagine 196; that span reads GG.

This sequence belongs to the acetylglutamate kinase family. ArgB subfamily.

It localises to the cytoplasm. It carries out the reaction N-acetyl-L-glutamate + ATP = N-acetyl-L-glutamyl 5-phosphate + ADP. The protein operates within amino-acid biosynthesis; L-arginine biosynthesis; N(2)-acetyl-L-ornithine from L-glutamate: step 2/4. Catalyzes the ATP-dependent phosphorylation of N-acetyl-L-glutamate. In Rhodopseudomonas palustris (strain BisB5), this protein is Acetylglutamate kinase.